The sequence spans 537 residues: tRNA(His) guanylyltransferase 2 (537 aa).

Mg(2+)-binding residues include D307, G308, and D354. Residues 307-312 and 353-354 each bind GTP; these read DGCHFH and SD.

This sequence belongs to the tRNA(His) guanylyltransferase family. The cofactor is Mg(2+).

It localises to the nucleus. The protein localises to the nucleoplasm. It catalyses the reaction a 5'-end ribonucleotide-tRNA(His) + GTP + ATP + H2O = a 5'-end phospho-guanosine-ribonucleotide-tRNA(His) + AMP + 2 diphosphate + H(+). Functionally, adds a GMP to the 5'-end of tRNA(His) after transcription and RNase P cleavage. This chain is tRNA(His) guanylyltransferase 2 (THG2), found in Arabidopsis thaliana (Mouse-ear cress).